The sequence spans 249 residues: MLLIPAIDLKDGKCVRLKQGDMNDSTTFGEDPAAMARRWVDAGARRLHLVDLNGAFAGKPVNEGAIKSIIAAVGGDIPIQLGGGIRDLDTIERYLDDGLSYVIIGTAAVKNPGFLRDACTAFGGHIIVGLDARDGKVATDGWSKLTGHEVVDLARKFQDYGVEGVIYTDIGRDGMLSGINIEATVKLAQALTIPVIASGGLSNMADIDALCAVEHEGVDGVICGRSIYSGDLDFAAGQKRADELNGGRV.

Residue Asp8 is the Proton acceptor of the active site. The active-site Proton donor is the Asp131.

It belongs to the HisA/HisF family.

Its subcellular location is the cytoplasm. It catalyses the reaction 1-(5-phospho-beta-D-ribosyl)-5-[(5-phospho-beta-D-ribosylamino)methylideneamino]imidazole-4-carboxamide = 5-[(5-phospho-1-deoxy-D-ribulos-1-ylimino)methylamino]-1-(5-phospho-beta-D-ribosyl)imidazole-4-carboxamide. Its pathway is amino-acid biosynthesis; L-histidine biosynthesis; L-histidine from 5-phospho-alpha-D-ribose 1-diphosphate: step 4/9. In Leptothrix cholodnii (strain ATCC 51168 / LMG 8142 / SP-6) (Leptothrix discophora (strain SP-6)), this protein is 1-(5-phosphoribosyl)-5-[(5-phosphoribosylamino)methylideneamino] imidazole-4-carboxamide isomerase.